The chain runs to 599 residues: UvrABC system protein C (599 aa).

A GIY-YIG domain is found at 18 to 96 (QLPGVYRMLG…IKQHRPPYNI (79 aa)). The UVR domain maps to 207–242 (KELNQELIAKMEEAAEQLAFEKAMFYRDRLGLLREV).

It belongs to the UvrC family. As to quaternary structure, interacts with UvrB in an incision complex.

Its subcellular location is the cytoplasm. In terms of biological role, the UvrABC repair system catalyzes the recognition and processing of DNA lesions. UvrC both incises the 5' and 3' sides of the lesion. The N-terminal half is responsible for the 3' incision and the C-terminal half is responsible for the 5' incision. In Acinetobacter baylyi (strain ATCC 33305 / BD413 / ADP1), this protein is UvrABC system protein C.